The chain runs to 405 residues: Arginine biosynthesis bifunctional protein ArgJ (405 aa).

Positions 152, 178, 189, 276, 400, and 405 each coordinate substrate. Threonine 189 serves as the catalytic Nucleophile.

This sequence belongs to the ArgJ family. As to quaternary structure, heterotetramer of two alpha and two beta chains.

The protein localises to the cytoplasm. It catalyses the reaction N(2)-acetyl-L-ornithine + L-glutamate = N-acetyl-L-glutamate + L-ornithine. The enzyme catalyses L-glutamate + acetyl-CoA = N-acetyl-L-glutamate + CoA + H(+). It functions in the pathway amino-acid biosynthesis; L-arginine biosynthesis; L-ornithine and N-acetyl-L-glutamate from L-glutamate and N(2)-acetyl-L-ornithine (cyclic): step 1/1. It participates in amino-acid biosynthesis; L-arginine biosynthesis; N(2)-acetyl-L-ornithine from L-glutamate: step 1/4. In terms of biological role, catalyzes two activities which are involved in the cyclic version of arginine biosynthesis: the synthesis of N-acetylglutamate from glutamate and acetyl-CoA as the acetyl donor, and of ornithine by transacetylation between N(2)-acetylornithine and glutamate. In Pseudomonas aeruginosa (strain ATCC 15692 / DSM 22644 / CIP 104116 / JCM 14847 / LMG 12228 / 1C / PRS 101 / PAO1), this protein is Arginine biosynthesis bifunctional protein ArgJ.